We begin with the raw amino-acid sequence, 346 residues long: Probable 3-hydroxyacyl-CoA dehydrogenase (346 aa).

The segment at 322–346 (RANLSPSATPCTPWKARKATSCAPP) is disordered.

It belongs to the 3-hydroxyacyl-CoA dehydrogenase family.

It carries out the reaction a (3S)-3-hydroxyacyl-CoA + NAD(+) = a 3-oxoacyl-CoA + NADH + H(+). The sequence is that of Probable 3-hydroxyacyl-CoA dehydrogenase from Deinococcus radiodurans (strain ATCC 13939 / DSM 20539 / JCM 16871 / CCUG 27074 / LMG 4051 / NBRC 15346 / NCIMB 9279 / VKM B-1422 / R1).